Here is a 357-residue protein sequence, read N- to C-terminus: uncharacterized protein (357 aa).

Residues 120-145 (SSSTVNHDQPAEQPSDKSTDDSTGYP) are disordered.

This is an uncharacterized protein from Caenorhabditis elegans.